A 329-amino-acid polypeptide reads, in one-letter code: MAQRHLWIWFLCLQTWSEAAGKDADPMVMNGILGESVTFLLNIQEPKKIDNIAWTSQSSVAFIKPGVNKAEVTITQGTYKGRIEIIDQKYDLVIRDLRMEDAGTYKADINEENEETITKIYYLHIYRRLKTPKITQSLISSLNNTCNITLTCSVEKEEKDVTYSWSPFGEKSNVLQIVHSPMDQKLTYTCTAQNPVSNSSDSVTVQQPCTDTPSFHPRHAVLPGGLAVLFLLILIPMLAFLFRLYKRRRDRIVLEADDVSKKTVYAVVSRNAQPTESRIYDEIPQSKMLSCKEDPVTTIYSSVQLSEKMKETNMKDRSLPKALGNEIVV.

An N-terminal signal peptide occupies residues 1 to 21 (MAQRHLWIWFLCLQTWSEAAG). Residues 22–221 (KDADPMVMNG…TPSFHPRHAV (200 aa)) are Extracellular-facing. Residues 26–129 (PMVMNGILGE…IYYLHIYRRL (104 aa)) form the Ig-like V-type domain. Positions 132-206 (PKITQSLISS…SNSSDSVTVQ (75 aa)) constitute an Ig-like C2-type domain. The N-linked (GlcNAc...) asparagine glycan is linked to asparagine 147. A disulfide bridge connects residues cysteine 152 and cysteine 190. A helical transmembrane segment spans residues 222–242 (LPGGLAVLFLLILIPMLAFLF). The Cytoplasmic portion of the chain corresponds to 243–329 (RLYKRRRDRI…PKALGNEIVV (87 aa)). Residues 263–268 (TVYAVV) carry the ITSM 1 motif. A Phosphotyrosine modification is found at tyrosine 265. At tyrosine 280 the chain carries Phosphotyrosine; by LYN. The short motif at 298–303 (TIYSSV) is the ITSM 2 element. The residue at position 300 (tyrosine 300) is a Phosphotyrosine.

Homodimer; via its extracellular domain. Forms a head to tail dimer with a CD48 molecule from another cell. Interacts with SH2 domain-containing proteins SH2D1A/SAP and SH2D1B/EAT-2. Interacts with tyrosine-protein phosphatases PTPN6/SHP-1 and PTPN11/SHP-2 via its phosphorylated cytoplasmic domain, and this interaction is blocked by SH2D1A. Post-translationally, phosphorylated by tyrosine-protein kinase LCK on tyrosine residues following ligation induced by agonist monoclonal antibody. The association with SH2D1A/SAP is dependent of tyrosine phosphorylation of its cytoplasmic domain. Phosphorylated on Tyr-280 and Tyr-300 following platelet aggregation. Phosphorylated on tyrosine residues upon high affinity immunoglobulin epsilon receptor aggregation in mast cells. N-glycosylated. Predominantly expressed in hematopoietic tissues such as lymph node, spleen, thymus, and bone marrow. Detected also in lung.

It localises to the cell membrane. In terms of biological role, self-ligand receptor of the signaling lymphocytic activation molecule (SLAM) family. SLAM receptors triggered by homo- or heterotypic cell-cell interactions are modulating the activation and differentiation of a wide variety of immune cells and thus are involved in the regulation and interconnection of both innate and adaptive immune response. Activities are controlled by presence or absence of small cytoplasmic adapter proteins, SH2D1A/SAP and/or SH2D1B/EAT-2. Can mediate natural killer (NK) cell cytotoxicity dependent on SH2D1A and SH2D1B. Increases proliferative responses of activated T-cells and SH2D1A/SAP does not seen be required for this process. Homophilic interactions enhance interferon gamma/IFNG secretion in lymphocytes and induce platelet stimulation via a SH2D1A/SAP-dependent pathway. May serve as a marker for hematopoietic progenitor cells. Required for a prolonged T-cell:B-cell contact, optimal T follicular helper function, and germinal center formation. In germinal centers involved in maintaining B cell tolerance and in preventing autoimmunity. In mast cells negatively regulates high affinity immunoglobulin epsilon receptor signaling; independent of SH2D1A and SH2D1B but implicating FES and PTPN6/SHP-1. In macrophages enhances LPS-induced MAPK phosphorylation and NF-kappaB activation and modulates LPS-induced cytokine secretion; involving ITSM 2. Positively regulates macroautophagy in primary dendritic cells via stabilization of IRF8; inhibits TRIM21-mediated proteasomal degradation of IRF8. This is SLAM family member 5 (Cd84) from Mus musculus (Mouse).